Reading from the N-terminus, the 121-residue chain is Large ribosomal subunit protein uL22 (121 aa).

It belongs to the universal ribosomal protein uL22 family. As to quaternary structure, part of the 50S ribosomal subunit.

In terms of biological role, this protein binds specifically to 23S rRNA; its binding is stimulated by other ribosomal proteins, e.g. L4, L17, and L20. It is important during the early stages of 50S assembly. It makes multiple contacts with different domains of the 23S rRNA in the assembled 50S subunit and ribosome. Its function is as follows. The globular domain of the protein is located near the polypeptide exit tunnel on the outside of the subunit, while an extended beta-hairpin is found that lines the wall of the exit tunnel in the center of the 70S ribosome. This chain is Large ribosomal subunit protein uL22, found in Synechococcus sp. (strain CC9605).